The chain runs to 170 residues: Small capsomere-interacting protein (170 aa).

Residues 76–88 (TLRDQKPRERADR) are compositionally biased toward basic and acidic residues. The disordered stretch occupies residues 76-170 (TLRDQKPRER…ARKPPSGKKK (95 aa)). Over residues 110–139 (SGTTPGGQDSLGVSGSSITTLSSGPHSLSP) the composition is skewed to polar residues. A compositionally biased stretch (low complexity) spans 144–155 (LTTLSSTTETAA).

Belongs to the herpesviridae small capsomere-interacting protein family. In terms of assembly, interacts with the major capsid protein/MCP.

The protein localises to the virion. The protein resides in the host nucleus. Functionally, participates in the assembly of the infectious particles by decorating the outer surface of the capsid shell and thus forming a layer between the capsid and the tegument. Complexes composed of the major capsid protein and small capsomere-interacting protein/SCP assemble together in the host cytoplasm and are translocated to the nucleus, where they accumulate and participate in capsid assembly. The sequence is that of Small capsomere-interacting protein from Homo sapiens (Human).